A 379-amino-acid polypeptide reads, in one-letter code: Cytochrome b (379 aa).

4 helical membrane-spanning segments follow: residues 32–52, 76–97, 112–132, and 177–197; these read FGSL…FLAM, WLIR…YMHI, WNVG…GYVL, and FFAF…IHLL. H82 and H96 together coordinate heme b. Residues H181 and H195 each coordinate heme b. An a ubiquinone-binding site is contributed by H200. The next 4 helical transmembrane spans lie at 225–245, 287–307, 319–339, and 346–366; these read YKDL…ALFS, LGGV…PFLH, LTQI…WIGG, and FIII…VLSP.

The protein belongs to the cytochrome b family. The cytochrome bc1 complex contains 3 respiratory subunits (MT-CYB, CYC1 and UQCRFS1), 2 core proteins (UQCRC1 and UQCRC2) and probably 6 low-molecular weight proteins. Heme b is required as a cofactor.

Its subcellular location is the mitochondrion inner membrane. Component of the ubiquinol-cytochrome c reductase complex (complex III or cytochrome b-c1 complex) that is part of the mitochondrial respiratory chain. The b-c1 complex mediates electron transfer from ubiquinol to cytochrome c. Contributes to the generation of a proton gradient across the mitochondrial membrane that is then used for ATP synthesis. In Chlorophthalmus agassizi (Shortnose greeneye), this protein is Cytochrome b (mt-cyb).